A 93-amino-acid chain; its full sequence is Large ribosomal subunit protein bL27 (93 aa).

The propeptide occupies 1 to 9; the sequence is MLQLNLQFF. A disordered region spans residues 14 to 33; it reads GVGSTKNGRDSISKRLGAKR.

The protein belongs to the bacterial ribosomal protein bL27 family. The N-terminus is cleaved by ribosomal processing cysteine protease Prp.

In Exiguobacterium sp. (strain ATCC BAA-1283 / AT1b), this protein is Large ribosomal subunit protein bL27.